The following is a 124-amino-acid chain: Snaclec rhodocetin subunit delta (124 aa).

3 disulfides stabilise this stretch: cysteine 1–cysteine 12, cysteine 29–cysteine 120, and cysteine 95–cysteine 112. Residues 8–121 (YNGYCYRVFS…CEKTVSFVCK (114 aa)) enclose the C-type lectin domain.

Belongs to the snaclec family. In terms of assembly, heterotetramer of subunit alpha, beta, gamma and delta; only the gamma and the delta subunits are disulfide-linked. Alpha-beta heterodimer and gamma-delta heterodimer associate orthogonally, giving a cruciform conformation. This heterotetramer may covalently dimerizes thanks to the gamma subunit. Expressed by the venom gland.

It localises to the secreted. Potent inhibitor of collagen-induced platelet aggregation. It acts by binding to the integrin alpha2A domain and blocks collagen binding to integrin alpha-2/beta-1 (ITGA2/ITGB1). The gamma/delta subunits mainly contribute to this activity. This is Snaclec rhodocetin subunit delta from Calloselasma rhodostoma (Malayan pit viper).